Consider the following 505-residue polypeptide: Lysine--tRNA ligase (505 aa).

Mg(2+)-binding residues include Glu-415 and Glu-422.

This sequence belongs to the class-II aminoacyl-tRNA synthetase family. In terms of assembly, homodimer. Mg(2+) serves as cofactor.

The protein resides in the cytoplasm. It catalyses the reaction tRNA(Lys) + L-lysine + ATP = L-lysyl-tRNA(Lys) + AMP + diphosphate. The sequence is that of Lysine--tRNA ligase from Yersinia pseudotuberculosis serotype O:1b (strain IP 31758).